The primary structure comprises 484 residues: Ankyrin repeat protein T5 (484 aa).

ANK repeat units lie at residues 33–64, 68–102, 106–138, 142–173, 178–211, 251–280, and 284–313; these read MDDT…DVNG, TRTS…DVNA, DGRY…LVCV, DGCG…SIHD, YGFN…NSSQ, LDFT…NPNV, and LGNS…TPDA.

The protein is Ankyrin repeat protein T5 of Rabbit fibroma virus (strain Kasza) (RFV).